The primary structure comprises 596 residues: Elongation factor 4 (596 aa).

The tr-type G domain maps to 2 to 184 (KHIRNFSIIA…VIVAQIPPPE (183 aa)). Residues 14-19 (DHGKST) and 131-134 (NKID) each bind GTP.

Belongs to the TRAFAC class translation factor GTPase superfamily. Classic translation factor GTPase family. LepA subfamily.

Its subcellular location is the cell inner membrane. The enzyme catalyses GTP + H2O = GDP + phosphate + H(+). Its function is as follows. Required for accurate and efficient protein synthesis under certain stress conditions. May act as a fidelity factor of the translation reaction, by catalyzing a one-codon backward translocation of tRNAs on improperly translocated ribosomes. Back-translocation proceeds from a post-translocation (POST) complex to a pre-translocation (PRE) complex, thus giving elongation factor G a second chance to translocate the tRNAs correctly. Binds to ribosomes in a GTP-dependent manner. The sequence is that of Elongation factor 4 from Shewanella woodyi (strain ATCC 51908 / MS32).